Reading from the N-terminus, the 343-residue chain is Ribosomal RNA small subunit methyltransferase C (343 aa).

It belongs to the methyltransferase superfamily. RsmC family. In terms of assembly, monomer.

The protein localises to the cytoplasm. It catalyses the reaction guanosine(1207) in 16S rRNA + S-adenosyl-L-methionine = N(2)-methylguanosine(1207) in 16S rRNA + S-adenosyl-L-homocysteine + H(+). Specifically methylates the guanine in position 1207 of 16S rRNA in the 30S particle. This Shigella flexneri protein is Ribosomal RNA small subunit methyltransferase C.